Reading from the N-terminus, the 274-residue chain is Subtilisin DY (274 aa).

Q2 contacts Ca(2+). In terms of domain architecture, Peptidase S8 spans P5–A273. D32 functions as the Charge relay system in the catalytic mechanism. D41 provides a ligand contact to Ca(2+). The active-site Charge relay system is H63. Ca(2+)-binding residues include L74, N76, V80, A168, Y170, and V173. The Charge relay system role is filled by S220.

Belongs to the peptidase S8 family. Ca(2+) serves as cofactor.

It is found in the secreted. It carries out the reaction Hydrolysis of proteins with broad specificity for peptide bonds, and a preference for a large uncharged residue in P1. Hydrolyzes peptide amides.. Subtilisin is an extracellular alkaline serine protease, it catalyzes the hydrolysis of proteins and peptide amides. The chain is Subtilisin DY (apr) from Bacillus licheniformis.